We begin with the raw amino-acid sequence, 425 residues long: Polycomb protein esc (425 aa).

Residues Met-1 to Asn-10 are compositionally biased toward basic and acidic residues. Positions Met-1–Tyr-64 are disordered. Over residues Glu-11–Gly-20 the composition is skewed to acidic residues. Ser-15 carries the post-translational modification Phosphoserine. Residues Asp-21–Thr-42 show a composition bias toward low complexity. Over residues Arg-43–Ala-60 the composition is skewed to basic residues. WD repeat units lie at residues Asn-71–Leu-114, Val-126–Asn-165, Gly-168–Ile-208, Gly-214–Lys-253, Ile-284–Glu-321, Glu-340–Ala-379, and Arg-388–Ser-424.

It belongs to the WD repeat ESC family. Component of the polycomb repressive complex 2 (PRC2, also known as the Esc/E(Z) complex), composed of Caf1-55, esc, E(z), Su(z)12, and possibly pho. PRC2 associates with the accessory components Jarid2 and jing to form the PRC2 Jarid2-jing variant (PRC2.2). PRC2 may also associate with Pcl and HDAC1/Rpd3 during early embryogenesis. This complex is distinct from the PRC1 complex, which contains many other PcG proteins like Pc, Ph, Psc, Su(z)2. The two complexes however cooperate and interact together during the first 3 hours of development to establish PcG silencing. Interacts with corto in vitro. Widely expressed.

It localises to the nucleus. Its function is as follows. Polycomb group (PcG) protein. While PcG proteins are generally required to maintain the transcriptionally repressive state of homeotic genes throughout development, this protein is specifically required during the first 6 hours of embryogenesis to establish the repressed state. Component of the Esc/E(z) complex, which methylates 'Lys-9' and 'Lys-27' residues of histone H3, leading to transcriptional repression of the affected target gene. The Esc/E(z) complex is necessary but not sufficient for the repression of homeotic target genes, suggesting that the recruitment of the distinct PRC1 complex is also required. The protein is Polycomb protein esc (esc) of Drosophila melanogaster (Fruit fly).